Reading from the N-terminus, the 114-residue chain is Vacuolar ATPase assembly integral membrane protein VMA21 (114 aa).

The Cytoplasmic segment spans residues 1 to 39 (MATRRIISQEKTLLEKDDSIGSSPAADEKSNIAPAVPTS). Residues 40–60 (VIMKLLAFTLGMIVIPIGSYF) traverse the membrane as a helical segment. Residues 61-73 (ATVDSVFNGNSTY) are Lumenal-facing. Residues 74–94 (AGALAAIMANVVLIGYIFVAM) traverse the membrane as a helical segment. The Cytoplasmic portion of the chain corresponds to 95 to 114 (AEDQSDQQEGGGPGDGKKDR). The short motif at 111–114 (KKDR) is the Prevents secretion from ER element.

Belongs to the VMA21 family.

It localises to the endoplasmic reticulum membrane. The protein localises to the endoplasmic reticulum-Golgi intermediate compartment membrane. The protein resides in the cytoplasmic vesicle. It is found in the COPII-coated vesicle membrane. In terms of biological role, required for the assembly of the V0 complex of the vacuolar ATPase (V-ATPase) in the endoplasmic reticulum. In Chaetomium globosum (strain ATCC 6205 / CBS 148.51 / DSM 1962 / NBRC 6347 / NRRL 1970) (Soil fungus), this protein is Vacuolar ATPase assembly integral membrane protein VMA21.